We begin with the raw amino-acid sequence, 328 residues long: 4-hydroxythreonine-4-phosphate dehydrogenase (328 aa).

A substrate-binding site is contributed by threonine 125. Histidine 160, histidine 203, and histidine 269 together coordinate a divalent metal cation. The substrate site is built by lysine 277, asparagine 286, and arginine 295.

The protein belongs to the PdxA family. As to quaternary structure, homodimer. A divalent metal cation serves as cofactor.

It localises to the cytoplasm. The catalysed reaction is 4-(phosphooxy)-L-threonine + NAD(+) = 3-amino-2-oxopropyl phosphate + CO2 + NADH. The protein operates within cofactor biosynthesis; pyridoxine 5'-phosphate biosynthesis; pyridoxine 5'-phosphate from D-erythrose 4-phosphate: step 4/5. Functionally, catalyzes the NAD(P)-dependent oxidation of 4-(phosphooxy)-L-threonine (HTP) into 2-amino-3-oxo-4-(phosphooxy)butyric acid which spontaneously decarboxylates to form 3-amino-2-oxopropyl phosphate (AHAP). This Synechococcus sp. (strain RCC307) protein is 4-hydroxythreonine-4-phosphate dehydrogenase.